The chain runs to 708 residues: Fatty acid oxidation complex subunit alpha (708 aa).

Positions 1 to 190 (MSQDKAFTME…KAGLVTEVVP (190 aa)) are enoyl-CoA hydratase. Residues 310 to 708 (DSVKRVGVLG…MLENGWNFYQ (399 aa)) form a 3-hydroxyacyl-CoA dehydrogenase region.

In the N-terminal section; belongs to the enoyl-CoA hydratase/isomerase family. It in the central section; belongs to the 3-hydroxyacyl-CoA dehydrogenase family. In terms of assembly, heterotetramer of two alpha chains (FadJ) and two beta chains (FadI).

The protein localises to the cytoplasm. It carries out the reaction a (3S)-3-hydroxyacyl-CoA = a (2E)-enoyl-CoA + H2O. The enzyme catalyses a 4-saturated-(3S)-3-hydroxyacyl-CoA = a (3E)-enoyl-CoA + H2O. It catalyses the reaction a (3S)-3-hydroxyacyl-CoA + NAD(+) = a 3-oxoacyl-CoA + NADH + H(+). The catalysed reaction is (3S)-3-hydroxybutanoyl-CoA = (3R)-3-hydroxybutanoyl-CoA. It functions in the pathway lipid metabolism; fatty acid beta-oxidation. Catalyzes the formation of a hydroxyacyl-CoA by addition of water on enoyl-CoA. Also exhibits 3-hydroxyacyl-CoA epimerase and 3-hydroxyacyl-CoA dehydrogenase activities. This is Fatty acid oxidation complex subunit alpha from Idiomarina loihiensis (strain ATCC BAA-735 / DSM 15497 / L2-TR).